We begin with the raw amino-acid sequence, 216 residues long: Probable GTP-binding protein EngB (216 aa).

Residues 26-210 form the EngB-type G domain; it reads PMATIIFAGR…KNRIFEVIRE (185 aa). GTP contacts are provided by residues 34 to 41, 59 to 63, 76 to 79, 156 to 159, and 189 to 191; these read GRSNVGKS, GVTRK, DMPG, NKLD, and ISA. Mg(2+) is bound by residues Ser41 and Thr61.

It belongs to the TRAFAC class TrmE-Era-EngA-EngB-Septin-like GTPase superfamily. EngB GTPase family. Requires Mg(2+) as cofactor.

Necessary for normal cell division and for the maintenance of normal septation. In Pyrococcus horikoshii (strain ATCC 700860 / DSM 12428 / JCM 9974 / NBRC 100139 / OT-3), this protein is Probable GTP-binding protein EngB.